Consider the following 240-residue polypeptide: Ribonuclease HII (240 aa).

The region spanning 33–222 is the RNase H type-2 domain; sequence GPVAGVDEVG…VRRIVTRSNT (190 aa). The a divalent metal cation site is built by Asp-39, Glu-40, and Asp-131.

It belongs to the RNase HII family. Mn(2+) serves as cofactor. Requires Mg(2+) as cofactor.

The protein resides in the cytoplasm. The catalysed reaction is Endonucleolytic cleavage to 5'-phosphomonoester.. In terms of biological role, endonuclease that specifically degrades the RNA of RNA-DNA hybrids. The polypeptide is Ribonuclease HII (Mycobacterium leprae (strain Br4923)).